The primary structure comprises 101 residues: Small ribosomal subunit protein eS24 (101 aa).

The protein belongs to the eukaryotic ribosomal protein eS24 family.

In Methanocaldococcus jannaschii (strain ATCC 43067 / DSM 2661 / JAL-1 / JCM 10045 / NBRC 100440) (Methanococcus jannaschii), this protein is Small ribosomal subunit protein eS24.